The chain runs to 957 residues: Glycine dehydrogenase (decarboxylating) (957 aa).

Lysine 708 carries the N6-(pyridoxal phosphate)lysine modification.

Belongs to the GcvP family. The glycine cleavage system is composed of four proteins: P, T, L and H. Pyridoxal 5'-phosphate is required as a cofactor.

The enzyme catalyses N(6)-[(R)-lipoyl]-L-lysyl-[glycine-cleavage complex H protein] + glycine + H(+) = N(6)-[(R)-S(8)-aminomethyldihydrolipoyl]-L-lysyl-[glycine-cleavage complex H protein] + CO2. In terms of biological role, the glycine cleavage system catalyzes the degradation of glycine. The P protein binds the alpha-amino group of glycine through its pyridoxal phosphate cofactor; CO(2) is released and the remaining methylamine moiety is then transferred to the lipoamide cofactor of the H protein. This chain is Glycine dehydrogenase (decarboxylating), found in Klebsiella pneumoniae (strain 342).